Consider the following 100-residue polypeptide: Small ribosomal subunit protein uS14c (100 aa).

It belongs to the universal ribosomal protein uS14 family. As to quaternary structure, part of the 30S ribosomal subunit.

Its subcellular location is the plastid. It localises to the chloroplast. In terms of biological role, binds 16S rRNA, required for the assembly of 30S particles. This Helianthus annuus (Common sunflower) protein is Small ribosomal subunit protein uS14c.